The chain runs to 477 residues: Glutamate--tRNA ligase (477 aa).

The 'HIGH' region signature appears at 8 to 18 (PSPTGTLHIGT). Positions 247–251 (KLSKR) match the 'KMSKS' region motif. An ATP-binding site is contributed by Lys250.

The protein belongs to the class-I aminoacyl-tRNA synthetase family. Glutamate--tRNA ligase type 1 subfamily. In terms of assembly, monomer.

The protein localises to the cytoplasm. The catalysed reaction is tRNA(Glu) + L-glutamate + ATP = L-glutamyl-tRNA(Glu) + AMP + diphosphate. Its function is as follows. Catalyzes the attachment of glutamate to tRNA(Glu) in a two-step reaction: glutamate is first activated by ATP to form Glu-AMP and then transferred to the acceptor end of tRNA(Glu). This Parasynechococcus marenigrum (strain WH8102) protein is Glutamate--tRNA ligase.